Consider the following 215-residue polypeptide: Beta-crystallin A3 (215 aa).

Methionine 1 is subject to N-acetylmethionine. The interval 1-24 (METQTVQQELESLPTTKMAQTNPM) is disordered. The segment at 1-30 (METQTVQQELESLPTTKMAQTNPMPGSVGP) is N-terminal arm. Glutamate 2 carries the N-acetylalanine modification. 2 Beta/gamma crystallin 'Greek key' domains span residues 31–70 (WKIT…KVEC) and 71–117 (GAWV…RPIC). 2 positions are modified to S-glutathionyl cysteine; alternate: cysteine 82 and cysteine 117. S-methylcysteine; alternate occurs at positions 82 and 117. The connecting peptide stretch occupies residues 118–123 (SANHKE). 2 consecutive Beta/gamma crystallin 'Greek key' domains span residues 124 to 165 (SKIT…KIQC) and 166 to 214 (GAWV…RRIQ).

The protein belongs to the beta/gamma-crystallin family. As to quaternary structure, homo/heterodimer, or complexes of higher-order. The structure of beta-crystallin oligomers seems to be stabilized through interactions between the N-terminal arms. Interacts with CRYBA1. In terms of processing, specific cleavages in the N-terminal arm occur during lens maturation and give rise to several truncated forms. Isoform A1 contains a N-acetylalanine at position 2.

Functionally, crystallins are the dominant structural components of the vertebrate eye lens. The polypeptide is Beta-crystallin A3 (Bos taurus (Bovine)).